The following is a 689-amino-acid chain: Glycine--tRNA ligase beta subunit (689 aa).

This sequence belongs to the class-II aminoacyl-tRNA synthetase family. Tetramer of two alpha and two beta subunits.

It is found in the cytoplasm. It catalyses the reaction tRNA(Gly) + glycine + ATP = glycyl-tRNA(Gly) + AMP + diphosphate. The chain is Glycine--tRNA ligase beta subunit from Coxiella burnetii (strain RSA 331 / Henzerling II).